The primary structure comprises 282 residues: uncharacterized protein (282 aa).

This is an uncharacterized protein from Escherichia coli (strain K12).